Here is a 399-residue protein sequence, read N- to C-terminus: Glycerate 2-kinase (399 aa).

K48 is a binding site for substrate.

Belongs to the glycerate kinase type-1 family. Homodimer. The cofactor is Mg(2+). It depends on Ni(2+) as a cofactor. Requires Mn(2+) as cofactor. Co(2+) is required as a cofactor. Ca(2+) serves as cofactor. The cofactor is Zn(2+). It depends on Sr(2+) as a cofactor.

The enzyme catalyses (R)-glycerate + ATP = (2R)-2-phosphoglycerate + ADP + H(+). Its function is as follows. Catalyzes the ATP-dependent phosphorylation of D-glycerate to 2-phosphoglycerate. It can also utilize GTP, CTP, UTP, ADP, AMP or pyrophosphate as phosphate donor. The protein is Glycerate 2-kinase (gck) of Sulfurisphaera tokodaii (strain DSM 16993 / JCM 10545 / NBRC 100140 / 7) (Sulfolobus tokodaii).